The following is a 464-amino-acid chain: tRNA modification GTPase MnmE (464 aa).

3 residues coordinate (6S)-5-formyl-5,6,7,8-tetrahydrofolate: arginine 27, glutamate 90, and lysine 129. The 163-residue stretch at 222–384 (GVTLVLAGSV…LYDKIKTLIS (163 aa)) folds into the TrmE-type G domain. GTP-binding positions include 232 to 237 (NAGKSS), 251 to 257 (SSYPGTT), and 276 to 279 (DTAG). 2 residues coordinate Mg(2+): serine 236 and threonine 257. (6S)-5-formyl-5,6,7,8-tetrahydrofolate is bound at residue lysine 464.

It belongs to the TRAFAC class TrmE-Era-EngA-EngB-Septin-like GTPase superfamily. TrmE GTPase family. Homodimer. Heterotetramer of two MnmE and two MnmG subunits. The cofactor is K(+).

The protein localises to the cytoplasm. Exhibits a very high intrinsic GTPase hydrolysis rate. Involved in the addition of a carboxymethylaminomethyl (cmnm) group at the wobble position (U34) of certain tRNAs, forming tRNA-cmnm(5)s(2)U34. This Borrelia garinii subsp. bavariensis (strain ATCC BAA-2496 / DSM 23469 / PBi) (Borreliella bavariensis) protein is tRNA modification GTPase MnmE.